The chain runs to 113 residues: Nucleoid-associated protein Syncc9605_0027 (113 aa).

It belongs to the YbaB/EbfC family. Homodimer.

Its subcellular location is the cytoplasm. It localises to the nucleoid. Binds to DNA and alters its conformation. May be involved in regulation of gene expression, nucleoid organization and DNA protection. The protein is Nucleoid-associated protein Syncc9605_0027 of Synechococcus sp. (strain CC9605).